A 344-amino-acid polypeptide reads, in one-letter code: Palmitoyltransferase ZDHHC4 (344 aa).

At 1 to 2 (MD) the chain is on the lumenal side. The helical transmembrane segment at 3–23 (FLVLFLFYLASVLMGLVLICV) threads the bilayer. Topologically, residues 24-67 (CSKTHSLKGLARGGAQIFSCIIPECLQRAVHGLLHYLFHTRNHT) are cytoplasmic. Residues 68 to 88 (FIVLHLVLQGMVYTEYTWEVF) form a helical membrane-spanning segment. At 89–99 (GYCQELELSLH) the chain is on the lumenal side. The helical transmembrane segment at 100–120 (YLLLPYLLLGVNLFFFTLTCG) threads the bilayer. Residues 121–192 (TNPGIITKAN…NNCIGAWNIR (72 aa)) are Cytoplasmic-facing. The DHHC domain occupies 149-199 (VRCSTCDLRKPARSKHCSVCNWCVHRFDHHCVWVNNCIGAWNIRYFLIYVL). Cys179 serves as the catalytic S-palmitoyl cysteine intermediate. A helical transmembrane segment spans residues 193–213 (YFLIYVLTLTASAATVAIVST). Residues 214–255 (TFLVHLVVMSDLYQETYIDDLGHLHVMDTVFLIQYLFLTFPR) are Lumenal-facing. Residues 256-276 (IVFMLGFVVVLSFLLGGYLLF) traverse the membrane as a helical segment. Over 277 to 344 (VLYLAATNQT…FPCHERKKQE (68 aa)) the chain is Cytoplasmic. Residues 341–344 (KKQE) carry the Di-lysine motif motif.

The protein belongs to the DHHC palmitoyltransferase family. As to quaternary structure, interacts with CPT1A.

It localises to the endoplasmic reticulum membrane. The protein resides in the golgi apparatus membrane. Its subcellular location is the cell membrane. It catalyses the reaction L-cysteinyl-[protein] + hexadecanoyl-CoA = S-hexadecanoyl-L-cysteinyl-[protein] + CoA. Its function is as follows. Palmitoyltransferase that catalyzes the addition of palmitate onto protein substrates including the D(2) dopamine receptor DRD2, GSK3B or MAVS. Mediates GSK3B palmitoylation to prevent its AKT1-mediated phosphorylation leading to activation of the STAT3 signaling pathway. Also catalyzes MAVS palmitoylation which promotes its stabilization and activation by inhibiting 'Lys-48'- but facilitating 'Lys-63'-linked ubiquitination. The protein is Palmitoyltransferase ZDHHC4 of Homo sapiens (Human).